The primary structure comprises 1058 residues: Vacuolar protein sorting-associated protein 54 (1058 aa).

Positions 369–389 form a coiled coil; the sequence is SKKIVEVHERYEQKKKLLAKL.

Belongs to the VPS54 family. Component of the Golgi-associated retrograde protein (GARP) complex, also called VFT (VPS fifty-three) complex, composed of vps-51, vps-52, vps-53 and vps-54. Within the complex interacts with vps-52 and vps-53.

Its subcellular location is the golgi apparatus. It is found in the trans-Golgi network. Functionally, acts as a component of the GARP complex that is involved in retrograde transport from early and late endosomes to the trans-Golgi network (TGN). The GARP complex facilitates tethering as well as SNARE complex assembly at the Golgi. In Caenorhabditis elegans, this protein is Vacuolar protein sorting-associated protein 54.